The following is a 308-amino-acid chain: 2-methylisocitrate lyase (308 aa).

51-53 (SGA) contacts substrate. Residues Asp-90 and Asp-92 each coordinate Mg(2+). Residues 127–128 (CG), Arg-160, Glu-190, 212–214 (NMT), Arg-243, and Arg-272 contribute to the substrate site.

It belongs to the isocitrate lyase/PEP mutase superfamily. Methylisocitrate lyase family. In terms of assembly, homotetramer; dimer of dimers. The cofactor is Mg(2+).

The catalysed reaction is (2S,3R)-3-hydroxybutane-1,2,3-tricarboxylate = pyruvate + succinate. It participates in organic acid metabolism; propanoate degradation. Its function is as follows. Involved in the catabolism of short chain fatty acids (SCFA) via the 2-methylcitrate cycle I (propionate degradation route). Catalyzes the thermodynamically favored C-C bond cleavage of (2R,3S)-2-methylisocitrate to yield pyruvate and succinate via an alpha-carboxy-carbanion intermediate. The polypeptide is 2-methylisocitrate lyase (Aeropyrum pernix (strain ATCC 700893 / DSM 11879 / JCM 9820 / NBRC 100138 / K1)).